An 83-amino-acid chain; its full sequence is Cytochrome c oxidase subunit 12, mitochondrial (83 aa).

The 44-residue stretch at 24-67 (TKHCWQSYVDYHKCVNMKGEDFAPCKVFWKTYNALCPLDWIEKW) folds into the CHCH domain. The Cx9C motif signature appears at 27–37 (CWQSYVDYHKC). Cystine bridges form between Cys-27-Cys-59 and Cys-37-Cys-48. A Cx10C motif motif is present at residues 48–59 (CKVFWKTYNALC). Ser-82 carries the post-translational modification Phosphoserine.

The protein belongs to the cytochrome c oxidase subunit 6B family. As to quaternary structure, component of the cytochrome c oxidase (complex IV, CIV), a multisubunit enzyme composed of 12 subunits. The complex is composed of a catalytic core of 3 subunits COX1, COX2 and COX3, encoded in the mitochondrial DNA, and 9 supernumerary subunits COX4, COX5A (or COX5B), COX6, COX7, COX8, COX9, COX12, COX13 and COX26, which are encoded in the nuclear genome. The complex exists as a monomer or a dimer and forms supercomplexes (SCs) in the inner mitochondrial membrane with a dimer of ubiquinol-cytochrome c oxidoreductase (cytochrome b-c1 complex, complex III, CIII), resulting in 2 different assemblies (supercomplexes III(2)IV and III(2)IV(2)).

It is found in the mitochondrion inner membrane. It participates in energy metabolism; oxidative phosphorylation. Its function is as follows. Component of the cytochrome c oxidase, the last enzyme in the mitochondrial electron transport chain which drives oxidative phosphorylation. The respiratory chain contains 3 multisubunit complexes succinate dehydrogenase (complex II, CII), ubiquinol-cytochrome c oxidoreductase (cytochrome b-c1 complex, complex III, CIII) and cytochrome c oxidase (complex IV, CIV), that cooperate to transfer electrons derived from NADH and succinate to molecular oxygen, creating an electrochemical gradient over the inner membrane that drives transmembrane transport and the ATP synthase. Cytochrome c oxidase is the component of the respiratory chain that catalyzes the reduction of oxygen to water. Electrons originating from reduced cytochrome c in the intermembrane space (IMS) are transferred via the dinuclear copper A center (CU(A)) of COX2 and heme A of COX1 to the active site in COX1, a binuclear center (BNC) formed by heme A3 and copper B (CU(B)). The BNC reduces molecular oxygen to 2 water molecules unsing 4 electrons from cytochrome c in the IMS and 4 protons from the mitochondrial matrix. The polypeptide is Cytochrome c oxidase subunit 12, mitochondrial (COX12) (Saccharomyces cerevisiae (strain ATCC 204508 / S288c) (Baker's yeast)).